Consider the following 356-residue polypeptide: 11-beta-hydroxysteroid dehydrogenase (356 aa).

Residues 10–30 form a helical; Signal-anchor for type II membrane protein membrane-spanning segment; sequence LVVPPAGLLMLAFAWPSLAFF. Positions 13–26 match the Proline-knob motif; it reads PPAGLLMLAFAWPS. 54–85 contacts NADP(+); sequence GASSGIGEQIAYQYAKRRANLVLVARREHRLR. Substrate is bound at residue Ser-184. Tyr-197 (proton acceptor) is an active-site residue. Residues 197–201 and Lys-201 each bind NADP(+); that span reads YNAAK.

Belongs to the short-chain dehydrogenases/reductases (SDR) family. In terms of tissue distribution, expressed in megagametophytes (at protein level).

The protein localises to the lipid droplet. It localises to the membrane. The enzyme catalyses an 11beta-hydroxysteroid + NADP(+) = an 11-oxosteroid + NADPH + H(+). It catalyses the reaction corticosterone + NADP(+) = 11-dehydrocorticosterone + NADPH + H(+). The catalysed reaction is 17beta-estradiol + NADP(+) = estrone + NADPH + H(+). In terms of biological role, has dehydrogenase activity against corticosterone (11 beta-hydroxysteroid) and estradiol (17 beta-hydroxysteroid) in the presence of NADP(+). May be involved in signal transduction regulated by various sterols. This chain is 11-beta-hydroxysteroid dehydrogenase, found in Pinus massoniana (Chinese red pine).